Reading from the N-terminus, the 273-residue chain is 4-diphosphocytidyl-2-C-methyl-D-erythritol kinase (273 aa).

Residue K9 is part of the active site. 90–100 lines the ATP pocket; sequence PVAAGLGGGSA. D129 is a catalytic residue.

This sequence belongs to the GHMP kinase family. IspE subfamily.

The catalysed reaction is 4-CDP-2-C-methyl-D-erythritol + ATP = 4-CDP-2-C-methyl-D-erythritol 2-phosphate + ADP + H(+). It functions in the pathway isoprenoid biosynthesis; isopentenyl diphosphate biosynthesis via DXP pathway; isopentenyl diphosphate from 1-deoxy-D-xylulose 5-phosphate: step 3/6. Functionally, catalyzes the phosphorylation of the position 2 hydroxy group of 4-diphosphocytidyl-2C-methyl-D-erythritol. This Erythrobacter litoralis (strain HTCC2594) protein is 4-diphosphocytidyl-2-C-methyl-D-erythritol kinase.